We begin with the raw amino-acid sequence, 549 residues long: Dihydroxy-acid dehydratase (549 aa).

Mg(2+) is bound at residue Asp78. [2Fe-2S] cluster is bound at residue Cys119. 2 residues coordinate Mg(2+): Asp120 and Lys121. At Lys121 the chain carries N6-carboxylysine. [2Fe-2S] cluster is bound at residue Cys191. Glu441 contacts Mg(2+). Ser466 functions as the Proton acceptor in the catalytic mechanism.

This sequence belongs to the IlvD/Edd family. As to quaternary structure, homodimer. It depends on [2Fe-2S] cluster as a cofactor. Mg(2+) is required as a cofactor.

It catalyses the reaction (2R)-2,3-dihydroxy-3-methylbutanoate = 3-methyl-2-oxobutanoate + H2O. The catalysed reaction is (2R,3R)-2,3-dihydroxy-3-methylpentanoate = (S)-3-methyl-2-oxopentanoate + H2O. It participates in amino-acid biosynthesis; L-isoleucine biosynthesis; L-isoleucine from 2-oxobutanoate: step 3/4. The protein operates within amino-acid biosynthesis; L-valine biosynthesis; L-valine from pyruvate: step 3/4. In terms of biological role, functions in the biosynthesis of branched-chain amino acids. Catalyzes the dehydration of (2R,3R)-2,3-dihydroxy-3-methylpentanoate (2,3-dihydroxy-3-methylvalerate) into 2-oxo-3-methylpentanoate (2-oxo-3-methylvalerate) and of (2R)-2,3-dihydroxy-3-methylbutanoate (2,3-dihydroxyisovalerate) into 2-oxo-3-methylbutanoate (2-oxoisovalerate), the penultimate precursor to L-isoleucine and L-valine, respectively. The protein is Dihydroxy-acid dehydratase of Methanothermobacter thermautotrophicus (strain ATCC 29096 / DSM 1053 / JCM 10044 / NBRC 100330 / Delta H) (Methanobacterium thermoautotrophicum).